Reading from the N-terminus, the 189-residue chain is Peptidyl-tRNA hydrolase (189 aa).

Position 15 (tyrosine 15) interacts with tRNA. Catalysis depends on histidine 20, which acts as the Proton acceptor. Phenylalanine 66, asparagine 68, and asparagine 114 together coordinate tRNA.

The protein belongs to the PTH family. Monomer.

Its subcellular location is the cytoplasm. It carries out the reaction an N-acyl-L-alpha-aminoacyl-tRNA + H2O = an N-acyl-L-amino acid + a tRNA + H(+). In terms of biological role, hydrolyzes ribosome-free peptidyl-tRNAs (with 1 or more amino acids incorporated), which drop off the ribosome during protein synthesis, or as a result of ribosome stalling. Functionally, catalyzes the release of premature peptidyl moieties from peptidyl-tRNA molecules trapped in stalled 50S ribosomal subunits, and thus maintains levels of free tRNAs and 50S ribosomes. The polypeptide is Peptidyl-tRNA hydrolase (Streptococcus thermophilus (strain CNRZ 1066)).